A 263-amino-acid chain; its full sequence is Shikimate dehydrogenase (NADP(+)) (263 aa).

Shikimate contacts are provided by residues 21–23 (TLS) and T67. Catalysis depends on K71, which acts as the Proton acceptor. NADP(+) is bound at residue E83. The shikimate site is built by N92 and D103. NADP(+) contacts are provided by residues 126-130 (GAGGA) and L204. Y206 contacts shikimate. G227 contributes to the NADP(+) binding site.

The protein belongs to the shikimate dehydrogenase family. In terms of assembly, homodimer.

It catalyses the reaction shikimate + NADP(+) = 3-dehydroshikimate + NADPH + H(+). It functions in the pathway metabolic intermediate biosynthesis; chorismate biosynthesis; chorismate from D-erythrose 4-phosphate and phosphoenolpyruvate: step 4/7. In terms of biological role, involved in the biosynthesis of the chorismate, which leads to the biosynthesis of aromatic amino acids. Catalyzes the reversible NADPH linked reduction of 3-dehydroshikimate (DHSA) to yield shikimate (SA). The chain is Shikimate dehydrogenase (NADP(+)) from Sulfolobus acidocaldarius (strain ATCC 33909 / DSM 639 / JCM 8929 / NBRC 15157 / NCIMB 11770).